The chain runs to 344 residues: Probable dual-specificity RNA methyltransferase RlmN (344 aa).

Catalysis depends on E83, which acts as the Proton acceptor. The region spanning 89 to 323 (YLDRKTICVS…VSVRRSRGKD (235 aa)) is the Radical SAM core domain. C96 and C328 form a disulfide bridge. C103, C107, and C110 together coordinate [4Fe-4S] cluster. Residues 153–154 (GE), S185, 209–211 (SLH), and N285 each bind S-adenosyl-L-methionine. C328 acts as the S-methylcysteine intermediate in catalysis.

It belongs to the radical SAM superfamily. RlmN family. Requires [4Fe-4S] cluster as cofactor.

The protein localises to the cytoplasm. It carries out the reaction adenosine(2503) in 23S rRNA + 2 reduced [2Fe-2S]-[ferredoxin] + 2 S-adenosyl-L-methionine = 2-methyladenosine(2503) in 23S rRNA + 5'-deoxyadenosine + L-methionine + 2 oxidized [2Fe-2S]-[ferredoxin] + S-adenosyl-L-homocysteine. The catalysed reaction is adenosine(37) in tRNA + 2 reduced [2Fe-2S]-[ferredoxin] + 2 S-adenosyl-L-methionine = 2-methyladenosine(37) in tRNA + 5'-deoxyadenosine + L-methionine + 2 oxidized [2Fe-2S]-[ferredoxin] + S-adenosyl-L-homocysteine. Specifically methylates position 2 of adenine 2503 in 23S rRNA and position 2 of adenine 37 in tRNAs. This Deinococcus geothermalis (strain DSM 11300 / CIP 105573 / AG-3a) protein is Probable dual-specificity RNA methyltransferase RlmN.